A 187-amino-acid polypeptide reads, in one-letter code: Elongation factor P (187 aa).

The protein belongs to the elongation factor P family.

The protein localises to the cytoplasm. It functions in the pathway protein biosynthesis; polypeptide chain elongation. Its function is as follows. Involved in peptide bond synthesis. Stimulates efficient translation and peptide-bond synthesis on native or reconstituted 70S ribosomes in vitro. Probably functions indirectly by altering the affinity of the ribosome for aminoacyl-tRNA, thus increasing their reactivity as acceptors for peptidyl transferase. This chain is Elongation factor P, found in Chelativorans sp. (strain BNC1).